We begin with the raw amino-acid sequence, 595 residues long: Sialic acid-binding Ig-like lectin 12 (595 aa).

A signal peptide spans 1-18 (MLLLLLLLPPLLCGRVGA). 2 consecutive Ig-like V-type domains span residues 19 to 142 (KEQK…VNVT) and 143 to 269 (ASQD…VHVT). Residues 19-481 (KEQKDYLLTM…RPISGVTLGA (463 aa)) lie on the Extracellular side of the membrane. C44 and C104 form a disulfide bridge. Residues N140, N179, N230, and N290 are each glycosylated (N-linked (GlcNAc...) asparagine). Intrachain disulfides connect C166–C299, C171–C231, and C293–C342. The Ig-like C2-type 1 domain maps to 275–358 (PTFSIPGTLE…AGVTMTRAVR (84 aa)). N-linked (GlcNAc...) asparagine glycosylation is found at N360, N367, and N385. Residues 365–462 (PQNLTMTVFQ…GSQHISLSLS (98 aa)) form the Ig-like C2-type 2 domain. C401 and C446 are oxidised to a cystine. A helical membrane pass occupies residues 482–502 (FGGAGATALVFLYFCIIFVVV). At 503-595 (RSCRKKSARP…YEYSEINIPK (93 aa)) the chain is on the cytoplasmic side. The tract at residues 512-560 (PAVGVGDTGMEDANAVRGSASQGPLIESPADDSPPHHAPPALATPSPEE) is disordered. The ITIM motif motif lies at 563-568 (IQYASL). 2 positions are modified to phosphotyrosine: Y565 and Y588. The short motif at 586–591 (YEYSEI) is the SLAM-like motif element.

Belongs to the immunoglobulin superfamily. SIGLEC (sialic acid binding Ig-like lectin) family. As to expression, isoform Short is highly expressed in spleen, small intestine and adrenal gland; it is lower expressed in thyroid, placenta, brain, stomach, bone marrow, spinal cord and breast. Isoform Long is highly expressed in spleen, small intestine and bone marrow; it is lower expressed in thyroid, placenta, thymus, trachea, stomach, lung, adrenal gland, fetal brain and testis.

It localises to the membrane. In terms of biological role, putative adhesion molecule that mediates sialic-acid dependent binding to cells. The sialic acid recognition site may be masked by cis interactions with sialic acids on the same cell surface. The sequence is that of Sialic acid-binding Ig-like lectin 12 (SIGLEC12) from Homo sapiens (Human).